The chain runs to 285 residues: Acetyl-coenzyme A carboxylase carboxyl transferase subunit beta (285 aa).

Residues 29–285 (IMTKCPKCKK…ILKIHQEVTK (257 aa)) form the CoA carboxyltransferase N-terminal domain. Zn(2+) is bound by residues cysteine 33, cysteine 36, cysteine 52, and cysteine 55. Residues 33–55 (CPKCKKIMYTKELAENLNVCFNC) form a C4-type zinc finger.

It belongs to the AccD/PCCB family. As to quaternary structure, acetyl-CoA carboxylase is a heterohexamer composed of biotin carboxyl carrier protein (AccB), biotin carboxylase (AccC) and two subunits each of ACCase subunit alpha (AccA) and ACCase subunit beta (AccD). Zn(2+) serves as cofactor.

The protein localises to the cytoplasm. The enzyme catalyses N(6)-carboxybiotinyl-L-lysyl-[protein] + acetyl-CoA = N(6)-biotinyl-L-lysyl-[protein] + malonyl-CoA. It functions in the pathway lipid metabolism; malonyl-CoA biosynthesis; malonyl-CoA from acetyl-CoA: step 1/1. Functionally, component of the acetyl coenzyme A carboxylase (ACC) complex. Biotin carboxylase (BC) catalyzes the carboxylation of biotin on its carrier protein (BCCP) and then the CO(2) group is transferred by the transcarboxylase to acetyl-CoA to form malonyl-CoA. The protein is Acetyl-coenzyme A carboxylase carboxyl transferase subunit beta of Staphylococcus aureus (strain Mu3 / ATCC 700698).